The sequence spans 523 residues: Acetyl-CoA hydrolase (523 aa).

277–281 contacts CoA; sequence GIGNI. The active-site 5-glutamyl coenzyme A thioester intermediate is the E302. CoA-binding residues include N392 and G396.

It belongs to the acetyl-CoA hydrolase/transferase family.

It is found in the cytoplasm. The catalysed reaction is acetyl-CoA + H2O = acetate + CoA + H(+). Its function is as follows. Presumably involved in regulating the intracellular acetyl-CoA pool for fatty acid and cholesterol synthesis and fatty acid oxidation. This chain is Acetyl-CoA hydrolase (ACH1), found in Eremothecium gossypii (strain ATCC 10895 / CBS 109.51 / FGSC 9923 / NRRL Y-1056) (Yeast).